A 935-amino-acid chain; its full sequence is MAIIYNPNKKIFTLHTAHTTYQMQVDPLGYLLHLYYGEKTNSSMDYVLTYADRGFSGNPYAAGMDRTYSLDALPQEYPSLGTGDYRNIALNIKNEKGVESADLLFKSYEIRNGKYRLQGLPAVWADEKEAQTLEIVLADENAQVEVHLLYGVLEENDVITRSVRIKNTGTGQITIEKAAAACLDFVQGEFDVLRFYGKHAMERNLERTPLGHGTIAFGSRRGTSSHQYNPAVILAEKGTTETAGSCYGMLFVYSGNFSCEAEKDQFNQTRLLLGLNEELFSYPLASGETFTVPEVILSYSAEGLSALSQQYHNCIRNHVCRSKYVHMQRPVLINSWEAAYFDFTGDTIVDLAKEAASLGIDMVVMDDGWFGKRNDDNSSLGDWQVNETKLGGSLAELITRVHEQGMKFGIWIEPEMINEDSDLYRAHPDWAIRIQGKKPVRSRNQLLLDFSRKEVRDCVFDQICVVLDQGKIDYVKWDMNRSMADVYAGNLSYDYVLGVYDFMERLCSRYPDLLLEGCSGGGGRFDAGMLYYSPQIWCSDNTDAINRTRIQYGTSFFYPVSAMGAHVSAVPNHQTGRVTSFHTRGVTAMAGTFGYELNPALLSDEEKQQIREQIKTYKKYETLINEGTYWRLSDPFTDEIAAWMSVSEEQDHALVSVVRLMAEANQATVYVRLRGLKPDAVYLEEQSGRQYSGAALMHAGIPLPPFTEEYEAYQFAFTELKEAGRLYEKVQKWCDGNAENRVVISIYGGSGSGKTTLATALQQYFLNDGTECYLLSGDDYPHRIPKRNDEERMRVYKEAGEDGLRGYLGTKKEIDFDRINEVLAAFHEGKDSITLRHMGREDGEISLEETDFSGISVLLLEWTHGGSDDLHGVDLPVFLESSPGETRERRIRRNRDENAASPFICRVVELEQEKLEVQRKNAGLIVGKDGSVYEQ.

Residues 1-720 are alpha-galactosidase; it reads MAIIYNPNKK…EAYQFAFTEL (720 aa). The Mg(2+) site is built by Glu176, Glu277, and Phe280. Substrate is bound by residues 366–367, Arg443, 476–480, and 518–521; these read DD, KWDMN, and CSGG. Asp526 functions as the Nucleophile in the catalytic mechanism. A substrate-binding site is contributed by Asp540. Glu606 functions as the Proton donor/acceptor in the catalytic mechanism. The segment at 721–935 is sucrose kinase; it reads KEAGRLYEKV…VGKDGSVYEQ (215 aa). Residues 748–752 and Ala824 each bind ATP; that span reads GGSGS.

It in the N-terminal section; belongs to the glycosyl hydrolase 36 family. The protein in the C-terminal section; belongs to the uridine kinase family. In terms of assembly, homotetramer. Mg(2+) serves as cofactor.

It carries out the reaction Hydrolysis of terminal, non-reducing alpha-D-galactose residues in alpha-D-galactosides, including galactose oligosaccharides, galactomannans and galactolipids.. Its function is as follows. Bifunctional enzyme with alpha-galactosidase and sucrose kinase activities. Produces sucrose-6-phosphate directly from raffinose. Binds ATP. Phosphorylates sucrose specifically on the C6 position of glucose in the presence of ATP. Hydrolyzes melibiose, raffinose, stachyose and synthetic substrate p-nitrophenyl-alpha-D-galactopyranoside with high activity. Low activity against locust bean gum, guar gum and synthetic substrates xylose alpha-D-4-nitrophenol, glucose alpha-D-4-nitrophenol and o-nitrophenyl-alpha-D-galactopyranoside. The protein is Bifunctional alpha-galactosidase/sucrose kinase AgaSK of Mediterraneibacter gnavus (Ruminococcus gnavus).